We begin with the raw amino-acid sequence, 756 residues long: Serine/threonine-protein kinase CBK1 (756 aa).

Disordered regions lie at residues Met-1–Ser-180 and Gln-242–Thr-261. The span at Gln-23–Gln-34 shows a compositional bias: low complexity. The segment covering Phe-53 to Asn-77 has biased composition (polar residues). Thr-109 carries the post-translational modification Phosphothreonine. Residues His-120 to Ser-180 show a composition bias toward polar residues. Residues Gln-242–Ser-255 show a composition bias toward low complexity. The Protein kinase domain occupies Phe-352–Phe-672. Residues Ile-358–Val-366 and Lys-381 each bind ATP. The active-site Proton acceptor is the Asp-475. One can recognise an AGC-kinase C-terminal domain in the interval Arg-673–Asn-754. Positions Asn-707–Pro-732 are disordered.

This sequence belongs to the protein kinase superfamily. STE Ser/Thr protein kinase family. COT1 subfamily. Associates with PAG1/TAO3 and interacts with MOB2.

The enzyme catalyses L-seryl-[protein] + ATP = O-phospho-L-seryl-[protein] + ADP + H(+). It catalyses the reaction L-threonyl-[protein] + ATP = O-phospho-L-threonyl-[protein] + ADP + H(+). In terms of biological role, protein kinase that seems to play a role in the regulation of cell morphogenesis and proliferation. The chain is Serine/threonine-protein kinase CBK1 (CBK1) from Saccharomyces cerevisiae (strain ATCC 204508 / S288c) (Baker's yeast).